The sequence spans 596 residues: Elongation factor 4 (596 aa).

The 183-residue stretch at Lys2 to Glu184 folds into the tr-type G domain. GTP-binding positions include Asp14–Thr19 and Asn131–Asp134.

This sequence belongs to the TRAFAC class translation factor GTPase superfamily. Classic translation factor GTPase family. LepA subfamily.

It is found in the cell inner membrane. It catalyses the reaction GTP + H2O = GDP + phosphate + H(+). Its function is as follows. Required for accurate and efficient protein synthesis under certain stress conditions. May act as a fidelity factor of the translation reaction, by catalyzing a one-codon backward translocation of tRNAs on improperly translocated ribosomes. Back-translocation proceeds from a post-translocation (POST) complex to a pre-translocation (PRE) complex, thus giving elongation factor G a second chance to translocate the tRNAs correctly. Binds to ribosomes in a GTP-dependent manner. In Shewanella pealeana (strain ATCC 700345 / ANG-SQ1), this protein is Elongation factor 4.